The sequence spans 178 residues: 2-oxo-4-hydroxy-4-carboxy-5-ureidoimidazoline decarboxylase (178 aa).

Histidine 67 serves as the catalytic Proton donor. Substrate is bound by residues proline 68, 84–88 (SQREQ), and 119–123 (FVLAA).

This sequence belongs to the OHCU decarboxylase family.

It localises to the peroxisome. The catalysed reaction is 5-hydroxy-2-oxo-4-ureido-2,5-dihydro-1H-imidazole-5-carboxylate + H(+) = (S)-allantoin + CO2. The protein operates within purine metabolism; urate degradation; (S)-allantoin from urate: step 3/3. In terms of biological role, catalyzes the stereoselective decarboxylation of 2-oxo-4-hydroxy-4-carboxy-5-ureidoimidazoline (OHCU) to (S)-allantoin. In Mus musculus (Mouse), this protein is 2-oxo-4-hydroxy-4-carboxy-5-ureidoimidazoline decarboxylase (Urad).